The following is a 429-amino-acid chain: Enolase (429 aa).

(2R)-2-phosphoglycerate is bound at residue glutamine 163. Glutamate 205 serves as the catalytic Proton donor. Residues aspartate 242, glutamate 285, and aspartate 312 each coordinate Mg(2+). Residues lysine 337, arginine 366, serine 367, and lysine 388 each coordinate (2R)-2-phosphoglycerate. Residue lysine 337 is the Proton acceptor of the active site.

This sequence belongs to the enolase family. Mg(2+) is required as a cofactor.

It is found in the cytoplasm. The protein resides in the secreted. It localises to the cell surface. The catalysed reaction is (2R)-2-phosphoglycerate = phosphoenolpyruvate + H2O. It participates in carbohydrate degradation; glycolysis; pyruvate from D-glyceraldehyde 3-phosphate: step 4/5. Its function is as follows. Catalyzes the reversible conversion of 2-phosphoglycerate (2-PG) into phosphoenolpyruvate (PEP). It is essential for the degradation of carbohydrates via glycolysis. The protein is Enolase of Methylorubrum populi (strain ATCC BAA-705 / NCIMB 13946 / BJ001) (Methylobacterium populi).